The chain runs to 673 residues: Synaptotagmin-like protein 4 (673 aa).

A RabBD domain is found at Ile-4–Gln-122. The FYVE-type zinc-finger motif lies at Cys-63–Cys-105. The segment at Phe-184–Asp-253 is disordered. Residues Ser-202, Ser-205, Ser-218, Ser-222, and Ser-275 each carry the phosphoserine modification. A C2 1 domain is found at Val-358–Leu-480. At Ser-490 the chain carries Phosphoserine. One can recognise a C2 2 domain in the interval Pro-509 to Met-635.

Part of a ternary complex containing STX1A and RAB27A. Can bind both dominant negative and dominant active mutants of RAB27A. Binds STXBP1, RAB3A, RAB8A and RAB27B. Interacts with MYO5A. Detected in the pancreatic islet, in particular in insulin-positive beta cells, and in pituitary.

It is found in the membrane. Its subcellular location is the cytoplasmic vesicle. The protein localises to the secretory vesicle membrane. Its function is as follows. Modulates exocytosis of dense-core granules and secretion of hormones in the pancreas and the pituitary. Interacts with vesicles containing negatively charged phospholipids in a Ca(2+)-independent manner. The chain is Synaptotagmin-like protein 4 (Sytl4) from Mus musculus (Mouse).